The following is a 55-amino-acid chain: ATP synthase F(0) complex subunit 8 (55 aa).

A helical membrane pass occupies residues 7 to 24 (SPWFFIMLTTWLTFSLII).

The protein belongs to the ATPase protein 8 family. In terms of assembly, component of the ATP synthase complex composed at least of ATP5F1A/subunit alpha, ATP5F1B/subunit beta, ATP5MC1/subunit c (homooctomer), MT-ATP6/subunit a, MT-ATP8/subunit 8, ATP5ME/subunit e, ATP5MF/subunit f, ATP5MG/subunit g, ATP5MK/subunit k, ATP5MJ/subunit j, ATP5F1C/subunit gamma, ATP5F1D/subunit delta, ATP5F1E/subunit epsilon, ATP5PF/subunit F6, ATP5PB/subunit b, ATP5PD/subunit d, ATP5PO/subunit OSCP. ATP synthase complex consists of a soluble F(1) head domain (subunits alpha(3) and beta(3)) - the catalytic core - and a membrane F(0) domain - the membrane proton channel (subunits c, a, 8, e, f, g, k and j). These two domains are linked by a central stalk (subunits gamma, delta, and epsilon) rotating inside the F1 region and a stationary peripheral stalk (subunits F6, b, d, and OSCP).

It localises to the mitochondrion membrane. Functionally, subunit 8, of the mitochondrial membrane ATP synthase complex (F(1)F(0) ATP synthase or Complex V) that produces ATP from ADP in the presence of a proton gradient across the membrane which is generated by electron transport complexes of the respiratory chain. ATP synthase complex consist of a soluble F(1) head domain - the catalytic core - and a membrane F(1) domain - the membrane proton channel. These two domains are linked by a central stalk rotating inside the F(1) region and a stationary peripheral stalk. During catalysis, ATP synthesis in the catalytic domain of F(1) is coupled via a rotary mechanism of the central stalk subunits to proton translocation. In vivo, can only synthesize ATP although its ATP hydrolase activity can be activated artificially in vitro. Part of the complex F(0) domain. The sequence is that of ATP synthase F(0) complex subunit 8 from Columbina passerina (Common ground-dove).